Consider the following 415-residue polypeptide: Homoserine O-succinyltransferase (415 aa).

The 315-residue stretch at 69 to 383 (NAVLVCHALN…PHGHDAFLLD (315 aa)) folds into the AB hydrolase-1 domain. Ser175 functions as the Nucleophile in the catalytic mechanism. Arg245 lines the substrate pocket. Residues Asp344 and His377 contribute to the active site. Asp378 is a substrate binding site.

It belongs to the AB hydrolase superfamily. MetX family. Homodimer.

It localises to the cytoplasm. It catalyses the reaction L-homoserine + succinyl-CoA = O-succinyl-L-homoserine + CoA. The protein operates within amino-acid biosynthesis; L-methionine biosynthesis via de novo pathway; O-succinyl-L-homoserine from L-homoserine: step 1/1. In terms of biological role, transfers a succinyl group from succinyl-CoA to L-homoserine, forming succinyl-L-homoserine. This chain is Homoserine O-succinyltransferase, found in Bordetella parapertussis (strain 12822 / ATCC BAA-587 / NCTC 13253).